The chain runs to 721 residues: Protein mu-NS (721 aa).

The interval 1 to 13 (MASFKGFSANTVP) is interaction with sigma-NS. The tract at residues 1-38 (MASFKGFSANTVPVSKAKRDISSLAATPGLRSQSFTPS) is RNA-binding. The segment at 14–40 (VSKAKRDISSLAATPGLRSQSFTPSVD) is interaction with mu-2. An involved in the formation of factory-like inclusions region spans residues 471 to 721 (SNDVTDGIKL…IDFSVPTDEL (251 aa)). Coiled-coil stretches lie at residues 522–559 (PLLSQLRELSSEVTRLQMELSRAQSLNAQLEADVKSAQ) and 628–684 (LMNG…ALNQ).

It belongs to the orthoreovirus mu-NS protein family. Interacts with mu-2. Interacts with sigma-NS; in viral factories. Interacts with the inner capsid proteins lambda-1 and sigma-2, and outer capsid protein lambda-2; in viral factories. In terms of processing, the N-terminus is blocked.

The protein resides in the host cytoplasm. Its function is as follows. Non-structural protein implicated with protein sigma-NS in forming the matrix of viral factories, which are large inclusions in the host cytoplasm where replication intermediates are assembled and viral RNA replication takes place. Together with mu-2, recruits the other core proteins to these factories. Binds RNA and recruits viral mRNAs to sites of viral replication. The polypeptide is Protein mu-NS (M3) (Reovirus type 3 (strain Dearing) (T3D)).